The sequence spans 229 residues: MLTWLNRNSLDFPPLEKALREPNGLLAAGGDLSADRLISAYRHGCFPWFQDGQPILWWSPDPRTVLFPEELHISRSLAKVLRQSRYRVTFDQDFASVIKACAAPRSYANETWITGSMQAAYVELHRRGHAHSVEVWDQDELVGGLYGLAMGQLFFGESMFSRADNASKVGFATLVEHLTAWGFVLIDCQMPTQHLHSFGARSIPRQTFADYLSRHLDQPTDADWSARRV.

The protein belongs to the L/F-transferase family.

The protein resides in the cytoplasm. The enzyme catalyses N-terminal L-lysyl-[protein] + L-leucyl-tRNA(Leu) = N-terminal L-leucyl-L-lysyl-[protein] + tRNA(Leu) + H(+). The catalysed reaction is N-terminal L-arginyl-[protein] + L-leucyl-tRNA(Leu) = N-terminal L-leucyl-L-arginyl-[protein] + tRNA(Leu) + H(+). It carries out the reaction L-phenylalanyl-tRNA(Phe) + an N-terminal L-alpha-aminoacyl-[protein] = an N-terminal L-phenylalanyl-L-alpha-aminoacyl-[protein] + tRNA(Phe). Functions in the N-end rule pathway of protein degradation where it conjugates Leu, Phe and, less efficiently, Met from aminoacyl-tRNAs to the N-termini of proteins containing an N-terminal arginine or lysine. In Pseudomonas syringae pv. syringae (strain B728a), this protein is Leucyl/phenylalanyl-tRNA--protein transferase.